The chain runs to 225 residues: DNA repair protein RecO (225 aa).

The protein belongs to the RecO family.

Functionally, involved in DNA repair and RecF pathway recombination. This is DNA repair protein RecO from Clostridium perfringens (strain ATCC 13124 / DSM 756 / JCM 1290 / NCIMB 6125 / NCTC 8237 / Type A).